The chain runs to 150 residues: Catabolic 3-dehydroquinase 1 (150 aa).

Catalysis depends on Tyr-24, which acts as the Proton acceptor. Substrate is bound by residues Asn-75, His-81, and Asp-88. His-101 acts as the Proton donor in catalysis. Residues 102 to 103 and Arg-112 each bind substrate; that span reads VS.

The protein belongs to the type-II 3-dehydroquinase family. In terms of assembly, homododecamer. Adopts a ring-like structure, composed of an arrangement of two hexameric rings stacked on top of one another.

The catalysed reaction is 3-dehydroquinate = 3-dehydroshikimate + H2O. The protein operates within aromatic compound metabolism; 3,4-dihydroxybenzoate biosynthesis; 3,4-dihydroxybenzoate from 3-dehydroquinate: step 1/2. Is involved in the catabolism of quinate. Allows the utilization of quinate as carbon source via the beta-ketoadipate pathway. In Neosartorya fischeri (strain ATCC 1020 / DSM 3700 / CBS 544.65 / FGSC A1164 / JCM 1740 / NRRL 181 / WB 181) (Aspergillus fischerianus), this protein is Catabolic 3-dehydroquinase 1.